The chain runs to 572 residues: Outer spore wall assembly protein SHE10 (572 aa).

The N-terminal stretch at 1–19 (MRAISKLFVFTVLVLGSLQ) is a signal peptide. 2 coiled-coil regions span residues 351–372 (SQAN…REVV) and 485–510 (FQER…LREQ). The interval 539–572 (STSWSVPPADARAEPASGSPIQQAASEAAQQPSV) is disordered. Residues 560-572 (QQAASEAAQQPSV) show a composition bias toward low complexity.

It belongs to the SHE10 family. In terms of assembly, component of the mitochondria-localized RNase mitochondrial RNA-processing (RNase MRP) composed of one single RNA encoded by the NME1 gene and at least 31 proteins. Absent in the nucleus-localized RNase MRP (NuMRP).

It localises to the mitochondrion. Its function is as follows. Involved in spore wall assembly. May be a component of the mitochondrial RNase MRP (MtMRP), a ribonucleoprotein endoribonuclease involved in the cleaving RNA transcripts to generate primers for DNA replication in mitochondria. The polypeptide is Outer spore wall assembly protein SHE10 (Eremothecium gossypii (strain ATCC 10895 / CBS 109.51 / FGSC 9923 / NRRL Y-1056) (Yeast)).